A 377-amino-acid polypeptide reads, in one-letter code: N5-carboxyaminoimidazole ribonucleotide synthase (377 aa).

ATP is bound by residues arginine 93, lysine 133, 138–144 (GYDGRGQ), 175–178 (EEFV), glutamate 183, histidine 206, and 257–258 (NE). In terms of domain architecture, ATP-grasp spans 97–287 (KTLLDHAGVR…QFENHLRAVC (191 aa)).

The protein belongs to the PurK/PurT family. Homodimer.

It catalyses the reaction 5-amino-1-(5-phospho-beta-D-ribosyl)imidazole + hydrogencarbonate + ATP = 5-carboxyamino-1-(5-phospho-D-ribosyl)imidazole + ADP + phosphate + 2 H(+). The protein operates within purine metabolism; IMP biosynthesis via de novo pathway; 5-amino-1-(5-phospho-D-ribosyl)imidazole-4-carboxylate from 5-amino-1-(5-phospho-D-ribosyl)imidazole (N5-CAIR route): step 1/2. Functionally, catalyzes the ATP-dependent conversion of 5-aminoimidazole ribonucleotide (AIR) and HCO(3)(-) to N5-carboxyaminoimidazole ribonucleotide (N5-CAIR). This chain is N5-carboxyaminoimidazole ribonucleotide synthase, found in Vibrio vulnificus (strain YJ016).